The primary structure comprises 275 residues: Elongation factor Ts (275 aa).

Residues 76 to 79 (TDFV) are involved in Mg(2+) ion dislocation from EF-Tu.

The protein belongs to the EF-Ts family.

The protein localises to the cytoplasm. In terms of biological role, associates with the EF-Tu.GDP complex and induces the exchange of GDP to GTP. It remains bound to the aminoacyl-tRNA.EF-Tu.GTP complex up to the GTP hydrolysis stage on the ribosome. The sequence is that of Elongation factor Ts from Rhodococcus jostii (strain RHA1).